The following is a 374-amino-acid chain: Alpha-galactosylglucosyldiacylglycerol synthase (374 aa).

Belongs to the glycosyltransferase group 1 family. Glycosyltransferase 4 subfamily. It depends on Mg(2+) as a cofactor.

Its subcellular location is the cell membrane. The catalysed reaction is a 1,2-diacyl-3-O-(alpha-D-glucopyranosyl)-sn-glycerol + UDP-alpha-D-galactose = a 1,2-diacyl-3-O-[alpha-D-galactopyranosyl-(1-&gt;2)-alpha-D-glucopyranosyl]-sn-glycerol + UDP + H(+). Its activity is regulated as follows. Activated by the negatively charged lipid phosphatidylglycerol (PG). Galactosyltransferase involved in the biosynthesis of the bilayer-forming membrane lipid alpha-galactosyl-glucosyldiacylglycerol which is involved in maintaining constant nonbilayer/bilayer conditions (curvature packing stress). Also involved in the beta-lactam resistance. Catalyzes the transfer of a galactosyl residue from UDP-Gal to alpha-glucosyl-DAG (1,2-diacyl-3-O-(alpha-D-glucopyranosyl)-sn-glycerol) acceptor to form the corresponding galactosyl-glycosyl-DAG product (3-O-alpha-(D-galactopyranosyl-alpha-(1-&gt;2)-D-glucopyranosyl)-1,2-diacyl-sn-glycerol). It can only use UDP-Gal as sugar donor and alpha-glucosyl-DAG is the preferred sugar acceptor. The protein is Alpha-galactosylglucosyldiacylglycerol synthase (cpoA) of Streptococcus pneumoniae (strain ATCC BAA-255 / R6).